The following is a 265-amino-acid chain: Ribosomal RNA small subunit methyltransferase A (265 aa).

6 residues coordinate S-adenosyl-L-methionine: H13, L15, G40, E61, D85, and N103.

It belongs to the class I-like SAM-binding methyltransferase superfamily. rRNA adenine N(6)-methyltransferase family. RsmA subfamily.

It is found in the cytoplasm. The catalysed reaction is adenosine(1518)/adenosine(1519) in 16S rRNA + 4 S-adenosyl-L-methionine = N(6)-dimethyladenosine(1518)/N(6)-dimethyladenosine(1519) in 16S rRNA + 4 S-adenosyl-L-homocysteine + 4 H(+). Its function is as follows. Specifically dimethylates two adjacent adenosines (A1518 and A1519) in the loop of a conserved hairpin near the 3'-end of 16S rRNA in the 30S particle. May play a critical role in biogenesis of 30S subunits. This chain is Ribosomal RNA small subunit methyltransferase A, found in Bordetella bronchiseptica (strain ATCC BAA-588 / NCTC 13252 / RB50) (Alcaligenes bronchisepticus).